The chain runs to 82 residues: Envelope small membrane protein (82 aa).

Topologically, residues 1 to 19 are virion surface; sequence MTFPRALTVIDDNGMVISI. A helical membrane pass occupies residues 20 to 40; that stretch reads IFWFLLIIILILFSIALLNII. The Intravirion portion of the chain corresponds to 41–82; it reads KLCMVCCNLGRTVIIVPARHAYDAYKNFMQIRAYNPDEALLV.

The protein belongs to the alphacoronaviruses E protein family. As to quaternary structure, homopentamer. Interacts with membrane protein M in the budding compartment of the host cell, which is located between endoplasmic reticulum and the Golgi complex. Interacts with Nucleoprotein.

The protein resides in the host Golgi apparatus membrane. Plays a central role in virus morphogenesis and assembly. Acts as a viroporin and self-assembles in host membranes forming pentameric protein-lipid pores that allow ion transport. Also plays a role in the induction of apoptosis. This is Envelope small membrane protein from Canine coronavirus (strain Insavc-1) (CCoV).